A 1006-amino-acid chain; its full sequence is Retinoblastoma-related protein (1006 aa).

Residues 411 to 604 (TPVTTAMTTA…EKGSSMYNSL (194 aa)) form a domain A region. The pocket stretch occupies residues 411-855 (TPVTTAMTTA…NEIFVPAVKP (445 aa)). The tract at residues 605–724 (IVARPALSAE…PGGGGETCAE (120 aa)) is spacer. Residues 725–855 (TAVNVFFSKI…NEIFVPAVKP (131 aa)) form a domain B region. Residues 866–893 (AQSGSQVPEAKNNTNGVNPSSPRTSSFP) are compositionally biased toward polar residues. The segment at 866 to 898 (AQSGSQVPEAKNNTNGVNPSSPRTSSFPSLPDM) is disordered.

The protein belongs to the retinoblastoma protein (RB) family.

The protein resides in the nucleus. In terms of biological role, regulator of biological processes that recruits a histone deacetylase to control gene transcription. May play a role in the entry into mitosis, negatively regulating the cell proliferation. Formation of stable complexes with geminiviridae replication-associated proteins may create a cellular environment which favors viral DNA replication. The protein is Retinoblastoma-related protein (RB) of Scutellaria baicalensis (Baical skullcap).